The primary structure comprises 202 residues: Endoribonuclease YbeY (202 aa).

Positions 120, 124, and 130 each coordinate Zn(2+).

It belongs to the endoribonuclease YbeY family. Requires Zn(2+) as cofactor.

It localises to the cytoplasm. Functionally, single strand-specific metallo-endoribonuclease involved in late-stage 70S ribosome quality control and in maturation of the 3' terminus of the 16S rRNA. The protein is Endoribonuclease YbeY of Corynebacterium kroppenstedtii (strain DSM 44385 / JCM 11950 / CIP 105744 / CCUG 35717).